Consider the following 863-residue polypeptide: Aminopeptidase N (863 aa).

Residues Glu-124 and 263-267 (GAMEN) contribute to the substrate site. Residue His-299 coordinates Zn(2+). Glu-300 serves as the catalytic Proton acceptor. Zn(2+) contacts are provided by His-303 and Glu-322.

The protein belongs to the peptidase M1 family. Requires Zn(2+) as cofactor.

It catalyses the reaction Release of an N-terminal amino acid, Xaa-|-Yaa- from a peptide, amide or arylamide. Xaa is preferably Ala, but may be most amino acids including Pro (slow action). When a terminal hydrophobic residue is followed by a prolyl residue, the two may be released as an intact Xaa-Pro dipeptide.. In terms of biological role, aminopeptidase N is involved in the degradation of intracellular peptides generated by protein breakdown during normal growth as well as in response to nutrient starvation. This Caulobacter vibrioides (strain ATCC 19089 / CIP 103742 / CB 15) (Caulobacter crescentus) protein is Aminopeptidase N (pepN).